Reading from the N-terminus, the 409-residue chain is MDKLLERFLNYVSLDTQSKAGVRQVPSTEGQWKLLHLLKEQLEEMGLINVTLSEKGTLMATLPANVPGDIPAIGFISHVDTSPDCSGKNVNPQIVENYRGGDIALGIGDEVLSPVMFPVLHQLLGQTLITTDGKTLLGADDKAGIAEIMTALAVLQQKNIPHGDIRVAFTPDEEVGKGAKHFDVDAFDARWAYTVDGGGVGELEFENFNAASVNIKIVGNNVHPGTAKGVMVNALSLAARIHAEVPADESPEMTEGYEGFYHLASMKGTVERADMHYIIRDFDRKQFEARKRKMMEIAKKVGKGLHPDCYIELVIEDSYYNMREKVVEHPHILDIAQQAMRDCDIEPELKPIRGGTDGAQLSFMGLPCPNLFTGGYNYHGKHEFVTLEGMEKAVQVIVRIAELTAQRKS.

A Zn(2+)-binding site is contributed by His78. Asp80 is a catalytic residue. Residue Asp140 participates in Zn(2+) binding. Glu173 functions as the Proton acceptor in the catalytic mechanism. Positions 174, 196, and 379 each coordinate Zn(2+).

It belongs to the peptidase M20B family. Zn(2+) is required as a cofactor.

The protein resides in the cytoplasm. It catalyses the reaction Release of the N-terminal residue from a tripeptide.. In terms of biological role, cleaves the N-terminal amino acid of tripeptides. The sequence is that of Peptidase T from Escherichia coli O139:H28 (strain E24377A / ETEC).